Reading from the N-terminus, the 292-residue chain is Formamidopyrimidine-DNA glycosylase (292 aa).

Pro-2 acts as the Schiff-base intermediate with DNA in catalysis. Glu-3 acts as the Proton donor in catalysis. Catalysis depends on Lys-58, which acts as the Proton donor; for beta-elimination activity. The DNA site is built by His-98, Arg-128, and Arg-173. The segment at 258–292 adopts an FPG-type zinc-finger fold; the sequence is LVYDRAGQPCRVCATPVRQIVQGQRSTFYCPNCQH. Arg-282 (proton donor; for delta-elimination activity) is an active-site residue.

It belongs to the FPG family. As to quaternary structure, monomer. It depends on Zn(2+) as a cofactor.

The catalysed reaction is Hydrolysis of DNA containing ring-opened 7-methylguanine residues, releasing 2,6-diamino-4-hydroxy-5-(N-methyl)formamidopyrimidine.. The enzyme catalyses 2'-deoxyribonucleotide-(2'-deoxyribose 5'-phosphate)-2'-deoxyribonucleotide-DNA = a 3'-end 2'-deoxyribonucleotide-(2,3-dehydro-2,3-deoxyribose 5'-phosphate)-DNA + a 5'-end 5'-phospho-2'-deoxyribonucleoside-DNA + H(+). In terms of biological role, involved in base excision repair of DNA damaged by oxidation or by mutagenic agents. Acts as a DNA glycosylase that recognizes and removes damaged bases. Has a preference for oxidized purines, such as 7,8-dihydro-8-oxoguanine (8-oxoG). Has AP (apurinic/apyrimidinic) lyase activity and introduces nicks in the DNA strand. Cleaves the DNA backbone by beta-delta elimination to generate a single-strand break at the site of the removed base with both 3'- and 5'-phosphates. The sequence is that of Formamidopyrimidine-DNA glycosylase from Cupriavidus necator (strain ATCC 17699 / DSM 428 / KCTC 22496 / NCIMB 10442 / H16 / Stanier 337) (Ralstonia eutropha).